The primary structure comprises 704 residues: Elongation factor G (704 aa).

Residues 10-290 form the tr-type G domain; the sequence is TKVRNIGIMA…AVVDYLPSPL (281 aa). GTP-binding positions include 19–26, 83–87, and 137–140; these read AHIDAGKT, DTPGH, and NKMD.

It belongs to the TRAFAC class translation factor GTPase superfamily. Classic translation factor GTPase family. EF-G/EF-2 subfamily.

Its subcellular location is the cytoplasm. Catalyzes the GTP-dependent ribosomal translocation step during translation elongation. During this step, the ribosome changes from the pre-translocational (PRE) to the post-translocational (POST) state as the newly formed A-site-bound peptidyl-tRNA and P-site-bound deacylated tRNA move to the P and E sites, respectively. Catalyzes the coordinated movement of the two tRNA molecules, the mRNA and conformational changes in the ribosome. This chain is Elongation factor G, found in Beutenbergia cavernae (strain ATCC BAA-8 / DSM 12333 / CCUG 43141 / JCM 11478 / NBRC 16432 / NCIMB 13614 / HKI 0122).